We begin with the raw amino-acid sequence, 92 residues long: Auxin-responsive protein SAUR28 (92 aa).

The protein belongs to the ARG7 family. In terms of tissue distribution, higher expression in thermo-responsive cultivars (e.g. cv. Alst-1, cv. Ang-0 and cv. Com-0) than in low thermo-responsive cultivars (e.g. cv. Dja-1, cv. El-0 and cv. Kon).

It localises to the cell membrane. Its function is as follows. Functions as a positive effector of cell expansion through modulation of auxin transport. Involved in thermo-responsiveness of plant architecture. Enhances plasma membrane H(+)-ATPase. In Arabidopsis thaliana (Mouse-ear cress), this protein is Auxin-responsive protein SAUR28.